Consider the following 691-residue polypeptide: Elongation factor G (691 aa).

In terms of domain architecture, tr-type G spans 8–282 (ERVRNIGIAA…AVVNYLPAPV (275 aa)). GTP-binding positions include 17 to 24 (AHIDAGKT), 81 to 85 (DTPGH), and 135 to 138 (NKMD).

It belongs to the TRAFAC class translation factor GTPase superfamily. Classic translation factor GTPase family. EF-G/EF-2 subfamily.

It localises to the cytoplasm. Its function is as follows. Catalyzes the GTP-dependent ribosomal translocation step during translation elongation. During this step, the ribosome changes from the pre-translocational (PRE) to the post-translocational (POST) state as the newly formed A-site-bound peptidyl-tRNA and P-site-bound deacylated tRNA move to the P and E sites, respectively. Catalyzes the coordinated movement of the two tRNA molecules, the mRNA and conformational changes in the ribosome. The chain is Elongation factor G from Prochlorococcus marinus (strain NATL2A).